A 376-amino-acid polypeptide reads, in one-letter code: Succinyl-diaminopimelate desuccinylase (376 aa).

Zn(2+) is bound at residue His-67. Asp-69 is an active-site residue. Asp-100 is a binding site for Zn(2+). Glu-134 acts as the Proton acceptor in catalysis. Residues Glu-135, Glu-163, and His-349 each contribute to the Zn(2+) site.

Belongs to the peptidase M20A family. DapE subfamily. In terms of assembly, homodimer. The cofactor is Zn(2+). Co(2+) is required as a cofactor.

The enzyme catalyses N-succinyl-(2S,6S)-2,6-diaminopimelate + H2O = (2S,6S)-2,6-diaminopimelate + succinate. It participates in amino-acid biosynthesis; L-lysine biosynthesis via DAP pathway; LL-2,6-diaminopimelate from (S)-tetrahydrodipicolinate (succinylase route): step 3/3. Functionally, catalyzes the hydrolysis of N-succinyl-L,L-diaminopimelic acid (SDAP), forming succinate and LL-2,6-diaminopimelate (DAP), an intermediate involved in the bacterial biosynthesis of lysine and meso-diaminopimelic acid, an essential component of bacterial cell walls. In Actinobacillus succinogenes (strain ATCC 55618 / DSM 22257 / CCUG 43843 / 130Z), this protein is Succinyl-diaminopimelate desuccinylase.